The chain runs to 892 residues: Protein argonaute 11 (892 aa).

Residues 1–17 show a composition bias toward gly residues; that stretch reads MSSRGGGVGGRRGGPGG. 2 disordered regions span residues 1–68 and 86–117; these read MSSR…ALQP and MEAREGASSSSSASAPAVGEVEPPSRAVGALP. The segment covering 86–107 has biased composition (low complexity); it reads MEAREGASSSSSASAPAVGEVE. The region spanning 248-362 is the PAZ domain; that stretch reads SLKQFLAGTY…LPMEVCRIVK (115 aa). In terms of domain architecture, Piwi spans 541–848; sequence LLVIVLPDAN…AASRARHYLE (308 aa). Positions 850-876 are disordered; it reads GSLPDHGSSSASAAGGSRRNDRGVPVK. The span at 856 to 866 shows a compositional bias: low complexity; that stretch reads GSSSASAAGGS. Residues 867 to 876 are compositionally biased toward basic and acidic residues; the sequence is RRNDRGVPVK.

Belongs to the argonaute family. Ago subfamily.

Functionally, probably involved in the RNA silencing pathway. May bind to short RNAs such as microRNAs (miRNAs) or short interfering RNAs (siRNAs), and represses the translation of mRNAs which are complementary to them. The polypeptide is Protein argonaute 11 (AGO11) (Oryza sativa subsp. japonica (Rice)).